The primary structure comprises 251 residues: MSSYRGGSRGGGSNYMSNLPFGLGYGDVGKNHITEFPSIPLPINGPITNKERSLAVKYINFGKTVKDGPFYTGSMSLIIDQQENSKSGKRKPNIILDEDDTNDGIERYSDKYLKKRKIGISIDDHPYNLNLFPNELYNVMGINKKKLLAISKFNNADDVFTGTGLQDENIGLSMLAKLKELAEDVDDASTGDGAAKGSKTGEGEDDDLADDDFEEDEDEEDDDDYNAEKYFNNGDDDDYGDEEDPNEEAAF.

The tract at residues 186–251 (DDASTGDGAA…EEDPNEEAAF (66 aa)) is disordered. Ser189 bears the Phosphoserine mark. Composition is skewed to acidic residues over residues 203–225 (GEDDDLADDDFEEDEDEEDDDDY) and 234–251 (GDDDDYGDEEDPNEEAAF).

Belongs to the eukaryotic RPC7 RNA polymerase subunit family. In terms of assembly, component of the RNA polymerase III (Pol III) complex consisting of 17 subunits.

The protein resides in the nucleus. Its function is as follows. DNA-dependent RNA polymerase catalyzes the transcription of DNA into RNA using the four ribonucleoside triphosphates as substrates. Specific peripheric component of RNA polymerase III which synthesizes small RNAs, such as 5S rRNA and tRNAs. C31 is involved in the formation of the initiation complex. In Saccharomyces cerevisiae (strain ATCC 204508 / S288c) (Baker's yeast), this protein is DNA-directed RNA polymerase III subunit RPC7 (RPC31).